A 103-amino-acid chain; its full sequence is 4-amino-4-deoxychorismate mutase (103 aa).

The Chorismate mutase domain maps to Met-1–Met-92.

The enzyme catalyses 4-amino-4-deoxychorismate = 4-amino-4-deoxyprephenate. It functions in the pathway antibiotic biosynthesis. Involved in chloramphenicol biosynthesis. Probably catalyzes the conversion of 4-amino-4-deoxychorismate to 4-amino-4-deoxyprephenate. The chain is 4-amino-4-deoxychorismate mutase from Streptomyces venezuelae (strain ATCC 10712 / CBS 650.69 / DSM 40230 / JCM 4526 / NBRC 13096 / PD 04745).